The following is a 557-amino-acid chain: 2-isopropylmalate synthase (557 aa).

In terms of domain architecture, Pyruvate carboxyltransferase spans 33-307 (PIWCSSDLRD…DPQLDFSDID (275 aa)). Mg(2+) is bound by residues Asp-42, His-246, His-248, and Asn-282. The interval 439–557 (ANAPYALVSH…SLSQQQAKAA (119 aa)) is regulatory domain.

This sequence belongs to the alpha-IPM synthase/homocitrate synthase family. LeuA type 2 subfamily. Homodimer. Mg(2+) serves as cofactor.

The protein resides in the cytoplasm. It carries out the reaction 3-methyl-2-oxobutanoate + acetyl-CoA + H2O = (2S)-2-isopropylmalate + CoA + H(+). It participates in amino-acid biosynthesis; L-leucine biosynthesis; L-leucine from 3-methyl-2-oxobutanoate: step 1/4. Functionally, catalyzes the condensation of the acetyl group of acetyl-CoA with 3-methyl-2-oxobutanoate (2-ketoisovalerate) to form 3-carboxy-3-hydroxy-4-methylpentanoate (2-isopropylmalate). This Pseudomonas entomophila (strain L48) protein is 2-isopropylmalate synthase.